The following is a 110-amino-acid chain: uncharacterized protein (110 aa).

Transmembrane regions (helical) follow at residues 21–41 and 63–83; these read IQLALANFFAISCLWLKPQIC and PSMIHFLPLISLTFAFSIIVV.

Its subcellular location is the membrane. This is an uncharacterized protein from Saccharomyces cerevisiae (strain ATCC 204508 / S288c) (Baker's yeast).